We begin with the raw amino-acid sequence, 233 residues long: tRNA (guanine-N(1)-)-methyltransferase (233 aa).

S-adenosyl-L-methionine is bound by residues Gly113 and 133–138; that span reads IGDYVL.

Belongs to the RNA methyltransferase TrmD family. As to quaternary structure, homodimer.

Its subcellular location is the cytoplasm. It carries out the reaction guanosine(37) in tRNA + S-adenosyl-L-methionine = N(1)-methylguanosine(37) in tRNA + S-adenosyl-L-homocysteine + H(+). Specifically methylates guanosine-37 in various tRNAs. The polypeptide is tRNA (guanine-N(1)-)-methyltransferase (Ruminiclostridium cellulolyticum (strain ATCC 35319 / DSM 5812 / JCM 6584 / H10) (Clostridium cellulolyticum)).